The sequence spans 756 residues: Lysyl oxidase homolog 4 (756 aa).

The signal sequence occupies residues 1–24 (MAWSPPATLFLFLLLLGQPPPSRP). SRCR domains are found at residues 32–133 (LRLV…VICH), 159–287 (VRLK…VSCV), 311–411 (VRLR…VRCN), and 421–529 (VRLA…VSCM). 17 disulfides stabilise this stretch: Cys58–Cys122, Cys71–Cys132, Cys102–Cys112, Cys191–Cys276, Cys204–Cys286, Cys251–Cys261, Cys336–Cys400, Cys349–Cys410, Cys380–Cys390, Cys450–Cys515, Cys463–Cys528, Cys497–Cys507, Cys558–Cys564, Cys610–Cys658, Cys642–Cys648, Cys670–Cys680, and Cys717–Cys731. A glycan (N-linked (GlcNAc...) asparagine) is linked at Asn198. The interval 533–736 (PDLVMNAQLV…WLHNCHTGNS (204 aa)) is lysyl-oxidase like. Cu cation contacts are provided by His611, His613, and His615. N-linked (GlcNAc...) asparagine glycosylation occurs at Asn629. The segment at residues 638–674 (KASFCLEDTNCPTGLQRRYACANFGEQGVTVGCWDTY) is a cross-link (lysine tyrosylquinone (Lys-Tyr)). 2',4',5'-topaquinone is present on Tyr674.

This sequence belongs to the lysyl oxidase family. Cu cation serves as cofactor. Lysine tyrosylquinone residue is required as a cofactor. In terms of processing, the lysine tyrosylquinone cross-link (LTQ) is generated by condensation of the epsilon-amino group of a lysine with a topaquinone produced by oxidation of tyrosine. Post-translationally, may be proteolytically cleaved by BMP1. As to expression, expressed in many tissues, the highest levels among the tissues studied being in the skeletal muscle, testis and pancreas. Expressed in cartilage.

Its subcellular location is the secreted. It localises to the extracellular space. The enzyme catalyses L-lysyl-[protein] + O2 + H2O = (S)-2-amino-6-oxohexanoyl-[protein] + H2O2 + NH4(+). Inhibited by beta-aminopropionitrile (BAPN). Catalyzes the oxidative deamination of lysine and hydroxylysine residues in collagen and elastin, resulting in the formation of covalent cross-linkages, and the stabilization of collagen and elastin fibers. This Homo sapiens (Human) protein is Lysyl oxidase homolog 4 (LOXL4).